The sequence spans 196 residues: Xanthine phosphoribosyltransferase (196 aa).

Leucine 26 and asparagine 33 together coordinate xanthine. Position 134–138 (134–138) interacts with 5-phospho-alpha-D-ribose 1-diphosphate; it reads ASGEA. Residue lysine 162 participates in xanthine binding.

It belongs to the purine/pyrimidine phosphoribosyltransferase family. Xpt subfamily. As to quaternary structure, homodimer.

It is found in the cytoplasm. It catalyses the reaction XMP + diphosphate = xanthine + 5-phospho-alpha-D-ribose 1-diphosphate. It participates in purine metabolism; XMP biosynthesis via salvage pathway; XMP from xanthine: step 1/1. In terms of biological role, converts the preformed base xanthine, a product of nucleic acid breakdown, to xanthosine 5'-monophosphate (XMP), so it can be reused for RNA or DNA synthesis. This Moorella thermoacetica (strain ATCC 39073 / JCM 9320) protein is Xanthine phosphoribosyltransferase.